Here is a 323-residue protein sequence, read N- to C-terminus: Beta-ketoacyl-[acyl-carrier-protein] synthase III (323 aa).

Residues cysteine 113 and histidine 250 contribute to the active site. The interval glutamine 251 to arginine 255 is ACP-binding. Residue asparagine 280 is part of the active site.

This sequence belongs to the thiolase-like superfamily. FabH family. Homodimer.

Its subcellular location is the cytoplasm. The catalysed reaction is malonyl-[ACP] + acetyl-CoA + H(+) = 3-oxobutanoyl-[ACP] + CO2 + CoA. It participates in lipid metabolism; fatty acid biosynthesis. Catalyzes the condensation reaction of fatty acid synthesis by the addition to an acyl acceptor of two carbons from malonyl-ACP. Catalyzes the first condensation reaction which initiates fatty acid synthesis and may therefore play a role in governing the total rate of fatty acid production. Possesses both acetoacetyl-ACP synthase and acetyl transacylase activities. Its substrate specificity determines the biosynthesis of branched-chain and/or straight-chain of fatty acids. This chain is Beta-ketoacyl-[acyl-carrier-protein] synthase III, found in Allorhizobium ampelinum (strain ATCC BAA-846 / DSM 112012 / S4) (Agrobacterium vitis (strain S4)).